We begin with the raw amino-acid sequence, 400 residues long: Argininosuccinate synthase (400 aa).

Residue 8–16 (AYSGGLDTS) participates in ATP binding. L-citrulline is bound by residues Tyr-87 and Ser-92. An ATP-binding site is contributed by Gly-117. Thr-119, Asn-123, and Asp-124 together coordinate L-aspartate. Asn-123 lines the L-citrulline pocket. Residues Arg-127, Ser-175, Glu-259, and Tyr-271 each contribute to the L-citrulline site.

It belongs to the argininosuccinate synthase family. Type 1 subfamily. In terms of assembly, homotetramer.

The protein localises to the cytoplasm. It catalyses the reaction L-citrulline + L-aspartate + ATP = 2-(N(omega)-L-arginino)succinate + AMP + diphosphate + H(+). It participates in amino-acid biosynthesis; L-arginine biosynthesis; L-arginine from L-ornithine and carbamoyl phosphate: step 2/3. The polypeptide is Argininosuccinate synthase (Frankia casuarinae (strain DSM 45818 / CECT 9043 / HFP020203 / CcI3)).